Reading from the N-terminus, the 551-residue chain is Interferon-induced, double-stranded RNA-activated protein kinase (551 aa).

The residue at position 2 (A2) is an N-acetylalanine. The interval 2–180 (AGDLSAGFFM…SVKSDYLSSG (179 aa)) is (Microbial infection) Interaction with HCV NS5A. The 69-residue stretch at 9-77 (FFMEELNTYR…AKLAVEILNK (69 aa)) folds into the DRBM 1 domain. K69 participates in a covalent cross-link: Glycyl lysine isopeptide (Lys-Gly) (interchain with G-Cter in ISG15). S83 carries the phosphoserine modification. 3 positions are modified to phosphothreonine; by autocatalysis: T88, T89, and T90. One can recognise a DRBM 2 domain in the interval 100 to 167 (NYIGLINRIA…AKLAYLQILS (68 aa)). Y101 is subject to Phosphotyrosine; by autocatalysis. K159 participates in a covalent cross-link: Glycyl lysine isopeptide (Lys-Gly) (interchain with G-Cter in ISG15). Y162 is modified (phosphotyrosine; by autocatalysis). Residues 202–215 (SSSEGDFSADTSEI) are compositionally biased toward polar residues. A disordered region spans residues 202–222 (SSSEGDFSADTSEINSNSDSL). S242 carries the phosphoserine; by autocatalysis modification. 2 positions are modified to phosphothreonine; by autocatalysis: T255 and T258. The segment at 266–362 (DFKEIELIGS…NSSRSKTKCL (97 aa)) is dimerization. An interaction with TRAF5 region spans residues 266-551 (DFKEIELIGS…SPEKNERHTC (286 aa)). The Protein kinase domain occupies 267–538 (FKEIELIGSG…TSEILRTLTV (272 aa)). 273–281 (IGSGGFGQV) lines the ATP pocket. Y293 is modified (phosphotyrosine; by autocatalysis). K296 contributes to the ATP binding site. 2 tandem repeats follow at residues 331–343 (DYDP…SLES) and 345–357 (DYDP…SSRS). The segment at 331 to 357 (DYDPETSDDSLESSDYDPENSKNSSRS) is 2 X 13 AA approximate repeats. The segment at 379–496 (EKRRGEKLDK…TAFETSKFFT (118 aa)) is interaction with EIF2S1/EIF-2ALPHA. D414 functions as the Proton acceptor in the catalytic mechanism. D432 is a Mg(2+) binding site. T446 and T451 each carry phosphothreonine; by autocatalysis. 2 positions are modified to phosphoserine: S456 and S542.

It belongs to the protein kinase superfamily. Ser/Thr protein kinase family. GCN2 subfamily. In terms of assembly, homodimer. Interacts with STRBP. Interacts with DNAJC3. Forms a complex with FANCA, FANCC, FANCG and HSP70. Interacts with ADAR/ADAR1. Interacts with IRS1. The inactive form interacts with NCK1 and GSN. Interacts (via the kinase catalytic domain) with STAT3 (via SH2 domain), TRAF2 (C-terminus), TRAF5 (C-terminus) and TRAF6 (C-terminus). Interacts with MAP2K6, IKBKB/IKKB, NPM1, TARBP2, NLRP1, NLRP3, NLRC4 and AIM2. Interacts (via DRBM 1 domain) with DUS2L (via DRBM domain). Interacts with DHX9 (via N-terminus) and this interaction is dependent upon activation of the kinase. Interacts with EIF2S1/EIF-2ALPHA; this interaction induces a conformational change in EIF2S1 and its phosphorylation by EIF2AK2. (Microbial infection) Interacts with human cytomegalovirus (HCMV) TRS1; this interaction retains EIF2AK2 to the nucleus and prevents its activation. As to quaternary structure, (Microbial infection) Interacts with vaccinia virus protein K3 (K3L); this interaction inhibits EIF2AK2. In terms of assembly, (Microbial infection) Interacts with human herpes simplex virus 1 (HHV-1) protein US11 in an RNA-dependent manner. (Microbial infection) The inactive form interacts with Toscana virus (TOS) NSS. As to quaternary structure, (Microbial infection) Interacts with herpes virus 8 protein v-IRF2; this interaction inhibits EIF2AK2 activation. In terms of assembly, (Microbial infection) Interacts with vaccinia protein E3. (Microbial infection) Interacts (via N-terminus) with Hepatitis C virus (HCV) mature core protein (via N-terminus); this interaction induces the autophosphorylation of EIF2AK2. As to quaternary structure, (Microbial infection) Interacts with Hepatitis C virus (HCV) non-structural protein 5A (NS5A); this interaction leads to disruption of EIF2AK2 dimerization by NS5A. In terms of assembly, (Microbial infection) Interacts with Hepatitis C virus (HCV) envelope glycoprotein E2; this interaction inhibits EIF2AK2 and blocks its inhibitory effect on protein synthesis and cell growth. (Microbial infection) Interacts with human respiratory syncytial virus (HRSV) nucleoprotein; this interaction inhibits EIF2AK2 phosphorylation of EIF2S1 and blocks EIF2AK2-mediated translation shutoff. As to quaternary structure, (Microbial infection) Interacts with human herpesvirus 8 protein MTA/ORF57; this interaction inhibits stress granule formation. Mg(2+) is required as a cofactor. In terms of processing, autophosphorylated on several Ser, Thr and Tyr residues. Autophosphorylation of Thr-451 is dependent on Thr-446 and is stimulated by dsRNA binding and dimerization. Autophosphorylation apparently leads to the activation of the kinase. Tyrosine autophosphorylation is essential for efficient dsRNA-binding, dimerization, and kinase activation. As to expression, highly expressed in thymus, spleen and bone marrow compared to non-hematopoietic tissues such as small intestine, liver, or kidney tissues. Colocalizes with GSK3B and TAU in the Alzheimer disease (AD) brain. Elevated levels seen in breast and colon carcinomas, and which correlates with tumor progression and invasiveness or risk of progression.

It localises to the cytoplasm. The protein resides in the nucleus. The protein localises to the perinuclear region. It catalyses the reaction L-seryl-[protein] + ATP = O-phospho-L-seryl-[protein] + ADP + H(+). It carries out the reaction L-threonyl-[protein] + ATP = O-phospho-L-threonyl-[protein] + ADP + H(+). The catalysed reaction is L-tyrosyl-[protein] + ATP = O-phospho-L-tyrosyl-[protein] + ADP + H(+). Initially produced in an inactive form and is activated by binding to viral dsRNA, which causes dimerization and autophosphorylation in the activation loop and stimulation of function. ISGylation can activate it in the absence of viral infection. Can also be activated by heparin, pro-inflammatory stimuli, growth factors, cytokines, oxidative stress and the cellular protein PRKRA. Activity is markedly stimulated by manganese ions. Activation is blocked by the viral components HIV-1 Tat protein and large amounts of HIV-1 trans-activation response (TAR) RNA element as well as by the cellular proteins TARBP2, DUS2L, NPM1, NCK1 and ADAR. Down-regulated by Toscana virus (TOS) and Rift valley fever virus (RVFV) NSS which promote its proteasomal degradation. Inhibited by vaccinia virus protein E3, probably via dsRNA sequestering. In terms of biological role, IFN-induced dsRNA-dependent serine/threonine-protein kinase that phosphorylates the alpha subunit of eukaryotic translation initiation factor 2 (EIF2S1/eIF-2-alpha) and plays a key role in the innate immune response to viral infection. Inhibits viral replication via the integrated stress response (ISR): EIF2S1/eIF-2-alpha phosphorylation in response to viral infection converts EIF2S1/eIF-2-alpha in a global protein synthesis inhibitor, resulting to a shutdown of cellular and viral protein synthesis, while concomitantly initiating the preferential translation of ISR-specific mRNAs, such as the transcriptional activator ATF4. Exerts its antiviral activity on a wide range of DNA and RNA viruses including hepatitis C virus (HCV), hepatitis B virus (HBV), measles virus (MV) and herpes simplex virus 1 (HHV-1). Also involved in the regulation of signal transduction, apoptosis, cell proliferation and differentiation: phosphorylates other substrates including p53/TP53, PPP2R5A, DHX9, ILF3, IRS1 and the HHV-1 viral protein US11. In addition to serine/threonine-protein kinase activity, also has tyrosine-protein kinase activity and phosphorylates CDK1 at 'Tyr-4' upon DNA damage, facilitating its ubiquitination and proteasomal degradation. Either as an adapter protein and/or via its kinase activity, can regulate various signaling pathways (p38 MAP kinase, NF-kappa-B and insulin signaling pathways) and transcription factors (JUN, STAT1, STAT3, IRF1, ATF3) involved in the expression of genes encoding pro-inflammatory cytokines and IFNs. Activates the NF-kappa-B pathway via interaction with IKBKB and TRAF family of proteins and activates the p38 MAP kinase pathway via interaction with MAP2K6. Can act as both a positive and negative regulator of the insulin signaling pathway (ISP). Negatively regulates ISP by inducing the inhibitory phosphorylation of insulin receptor substrate 1 (IRS1) at 'Ser-312' and positively regulates ISP via phosphorylation of PPP2R5A which activates FOXO1, which in turn up-regulates the expression of insulin receptor substrate 2 (IRS2). Can regulate NLRP3 inflammasome assembly and the activation of NLRP3, NLRP1, AIM2 and NLRC4 inflammasomes. Plays a role in the regulation of the cytoskeleton by binding to gelsolin (GSN), sequestering the protein in an inactive conformation away from actin. The protein is Interferon-induced, double-stranded RNA-activated protein kinase (EIF2AK2) of Homo sapiens (Human).